The following is a 336-amino-acid chain: NADH-quinone oxidoreductase subunit H (336 aa).

A run of 8 helical transmembrane segments spans residues 9–29, 77–97, 116–136, 156–176, 188–208, 236–256, 275–295, and 315–335; these read LVWIVLLAIVLILCVAYLTYA, FLFAPVIIFVLALVGWAVIPF, LGVMYLLGVAALEVYGTIIAG, ISYEIVIAPVVMTVILLTGSL, LPYWVDILMLPMTFIFFVSIL, IPFALFFLGEYANMILSSSIM, IVPGFIWFILKIVFVLFCFLI, and VFLPVTLLWIVVIGGLVAFNI.

This sequence belongs to the complex I subunit 1 family. As to quaternary structure, NDH-1 is composed of 14 different subunits. Subunits NuoA, H, J, K, L, M, N constitute the membrane sector of the complex.

It localises to the cell inner membrane. It catalyses the reaction a quinone + NADH + 5 H(+)(in) = a quinol + NAD(+) + 4 H(+)(out). In terms of biological role, NDH-1 shuttles electrons from NADH, via FMN and iron-sulfur (Fe-S) centers, to quinones in the respiratory chain. The immediate electron acceptor for the enzyme in this species is believed to be ubiquinone. Couples the redox reaction to proton translocation (for every two electrons transferred, four hydrogen ions are translocated across the cytoplasmic membrane), and thus conserves the redox energy in a proton gradient. This subunit may bind ubiquinone. This chain is NADH-quinone oxidoreductase subunit H, found in Neorickettsia sennetsu (strain ATCC VR-367 / Miyayama) (Ehrlichia sennetsu).